Consider the following 188-residue polypeptide: MASFSTNEFRSGMKIMLDNEPCVIIENEFVKPGKGQAFSRVKIRKLLSGKVLEKTFKSGESVEAADVVEVELDYLYNDGEFYHFMDNVSFEQIAADVKAVGDNAKWLVENNTCTLTLWNGNPIIVTPPNFVELEVTETDPGLKGDTQGTGGKPATLITGAVVRVPLFIQIGEVIKADTRSGEYVSRVK.

N6-(3,6-diaminohexanoyl)-5-hydroxylysine is present on lysine 34.

Belongs to the elongation factor P family. May be beta-lysylated on the epsilon-amino group of Lys-34 by the combined action of EpmA and EpmB, and then hydroxylated on the C5 position of the same residue by EpmC (if this protein is present). Lysylation is critical for the stimulatory effect of EF-P on peptide-bond formation. The lysylation moiety may extend toward the peptidyltransferase center and stabilize the terminal 3-CCA end of the tRNA. Hydroxylation of the C5 position on Lys-34 may allow additional potential stabilizing hydrogen-bond interactions with the P-tRNA.

The protein localises to the cytoplasm. It participates in protein biosynthesis; polypeptide chain elongation. Functionally, involved in peptide bond synthesis. Alleviates ribosome stalling that occurs when 3 or more consecutive Pro residues or the sequence PPG is present in a protein, possibly by augmenting the peptidyl transferase activity of the ribosome. Modification of Lys-34 is required for alleviation. This is Elongation factor P from Photobacterium profundum (strain SS9).